The chain runs to 737 residues: Ribosome-releasing factor 2, mitochondrial (737 aa).

The N-terminal 36 residues, 1–36 (MLCNRLHKAAFAARLRPRLPATVASCRQVHNSDGTI), are a transit peptide targeting the mitochondrion. The tr-type G domain occupies 39 to 318 (KRIRNIGILA…SVLNFLPAPS (280 aa)). Residues 48–55 (AHIDAGKT), 112–116 (DTPGH), and 166–169 (NKMD) each bind GTP.

The protein belongs to the TRAFAC class translation factor GTPase superfamily. Classic translation factor GTPase family. EF-G/EF-2 subfamily.

Its subcellular location is the mitochondrion. Its function is as follows. Mitochondrial GTPase that mediates the disassembly of ribosomes from messenger RNA at the termination of mitochondrial protein biosynthesis. Not involved in the GTP-dependent ribosomal translocation step during translation elongation. The sequence is that of Ribosome-releasing factor 2, mitochondrial from Anopheles gambiae (African malaria mosquito).